A 132-amino-acid chain; its full sequence is Small ribosomal subunit protein uS8 (132 aa).

Belongs to the universal ribosomal protein uS8 family. Part of the 30S ribosomal subunit. Contacts proteins S5 and S12.

Functionally, one of the primary rRNA binding proteins, it binds directly to 16S rRNA central domain where it helps coordinate assembly of the platform of the 30S subunit. This chain is Small ribosomal subunit protein uS8, found in Xanthobacter autotrophicus (strain ATCC BAA-1158 / Py2).